The chain runs to 122 residues: Cysteine proteinase inhibitor 5 (122 aa).

Residues 1–26 (MTSKVVFLLLLSLVVVLLPLYASAAA) form the signal peptide. The 89-residue stretch at 29–117 (GGWSPISNVT…RNLTSFEPAN (89 aa)) folds into the Cystatin domain. The N-linked (GlcNAc...) asparagine glycan is linked to Asn-36. The short motif at 72 to 76 (QVVSG) is the Secondary area of contact element. Asn-109 carries an N-linked (GlcNAc...) asparagine glycan.

It belongs to the cystatin family. Phytocystatin subfamily.

The protein localises to the secreted. Specific inhibitor of cysteine proteinases. Probably involved in the regulation of endogenous processes and in defense against pests and pathogens. This is Cysteine proteinase inhibitor 5 (CYS5) from Arabidopsis thaliana (Mouse-ear cress).